An 84-amino-acid chain; its full sequence is RNA-binding protein Hfq (84 aa).

The Sm domain occupies 10-69; the sequence is EPFLNTLRREHVPVSIYLVNGIKLQGQIESFDQYVVLLRNTVTQMVFKHAISTIVPGRAV.

The protein belongs to the Hfq family. Homohexamer.

RNA chaperone that binds small regulatory RNA (sRNAs) and mRNAs to facilitate mRNA translational regulation in response to envelope stress, environmental stress and changes in metabolite concentrations. Also binds with high specificity to tRNAs. The chain is RNA-binding protein Hfq from Verminephrobacter eiseniae (strain EF01-2).